Reading from the N-terminus, the 34-residue chain is Toxin GTx1-15 (34 aa).

3 cysteine pairs are disulfide-bonded: Cys2-Cys17, Cys9-Cys23, and Cys16-Cys30. A Phenylalanine amide modification is found at Phe34.

Belongs to the neurotoxin 10 (Hwtx-1) family. 08 (Gtx1-15) subfamily. In terms of tissue distribution, expressed by the venom gland.

The protein localises to the secreted. In terms of biological role, potent voltage-gated sodium channel blocker. Potently inhibits the voltage-gated sodium channels Nav1.7/SCN9A (IC(50)=0.58-10 nM). Also shows a moderate activity on Nav1.1/SCN1A (IC(50)=6 nM), Nav1.2/SCN2A (IC(50)=5-128 nM), Nav1.3/SCN3A (IC(50)=20.3-170 nM), and Nav1.6/SCN8A (IC(50)=17-20.1 nM). Shows an unclear inhibition of Nav1.4/SCN4A (IC(50)=200 nM to &gt;10 uM), Nav1.5/SCN5A (IC(50)=140 nM to &gt;10 uM) and Nav1.8/SCN10A (IC(50)=68-12200 nM). Weakly blocks the low voltage-gated calcium channels Cav3.1/CACNA1G (30% inhibition of the peak current at 9.8 nM). shows moderate affinity for lipid bilayers. In vivo, when tested on the OD1-induced mouse model of Nav1.7/SCN9A-mediated pain, the toxin is effective when co-administered with OD1, but lacks efficacy when delivered systemically. The protein is Toxin GTx1-15 of Grammostola porteri (Tarantula spider).